The sequence spans 871 residues: Protein arg-6, mitochondrial (871 aa).

A mitochondrion-targeting transit peptide spans 1 to 44 (MYSACAVALRAGARRVVRRVPKSARALPRAAAARRQISTTAARS). In terms of domain architecture, N-acetyltransferase spans 336-488 (QASTSLSEFK…DFTENGRAML (153 aa)). C689 is an active-site residue.

It in the N-terminal section; belongs to the acetylglutamate kinase family. In the C-terminal section; belongs to the NAGSA dehydrogenase family. Post-translationally, the protein precursor is cleaved into the two biologically active enzymes, the kinase and the reductase.

It is found in the mitochondrion. The catalysed reaction is N-acetyl-L-glutamate 5-semialdehyde + phosphate + NADP(+) = N-acetyl-L-glutamyl 5-phosphate + NADPH + H(+). It catalyses the reaction N-acetyl-L-glutamate + ATP = N-acetyl-L-glutamyl 5-phosphate + ADP. It participates in amino-acid biosynthesis; L-arginine biosynthesis; N(2)-acetyl-L-ornithine from L-glutamate: step 2/4. It functions in the pathway amino-acid biosynthesis; L-arginine biosynthesis; N(2)-acetyl-L-ornithine from L-glutamate: step 3/4. This is Protein arg-6, mitochondrial (arg-6) from Neurospora crassa (strain ATCC 24698 / 74-OR23-1A / CBS 708.71 / DSM 1257 / FGSC 987).